Reading from the N-terminus, the 196-residue chain is ATP-dependent Clp protease proteolytic subunit 1 (196 aa).

The active-site Nucleophile is Ser-96. His-121 is a catalytic residue.

This sequence belongs to the peptidase S14 family. Fourteen ClpP subunits assemble into 2 heptameric rings which stack back to back to give a disk-like structure with a central cavity, resembling the structure of eukaryotic proteasomes.

The protein resides in the cytoplasm. It catalyses the reaction Hydrolysis of proteins to small peptides in the presence of ATP and magnesium. alpha-casein is the usual test substrate. In the absence of ATP, only oligopeptides shorter than five residues are hydrolyzed (such as succinyl-Leu-Tyr-|-NHMec, and Leu-Tyr-Leu-|-Tyr-Trp, in which cleavage of the -Tyr-|-Leu- and -Tyr-|-Trp bonds also occurs).. Its function is as follows. Cleaves peptides in various proteins in a process that requires ATP hydrolysis. Has a chymotrypsin-like activity. Plays a major role in the degradation of misfolded proteins. In Prochlorococcus marinus subsp. pastoris (strain CCMP1986 / NIES-2087 / MED4), this protein is ATP-dependent Clp protease proteolytic subunit 1.